Reading from the N-terminus, the 251-residue chain is Ubiquinone/menaquinone biosynthesis C-methyltransferase UbiE (251 aa).

S-adenosyl-L-methionine is bound by residues Thr74, Asp95, Asn123–Ala124, and Ser140.

Belongs to the class I-like SAM-binding methyltransferase superfamily. MenG/UbiE family.

It catalyses the reaction a 2-demethylmenaquinol + S-adenosyl-L-methionine = a menaquinol + S-adenosyl-L-homocysteine + H(+). The catalysed reaction is a 2-methoxy-6-(all-trans-polyprenyl)benzene-1,4-diol + S-adenosyl-L-methionine = a 5-methoxy-2-methyl-3-(all-trans-polyprenyl)benzene-1,4-diol + S-adenosyl-L-homocysteine + H(+). Its pathway is quinol/quinone metabolism; menaquinone biosynthesis; menaquinol from 1,4-dihydroxy-2-naphthoate: step 2/2. It participates in cofactor biosynthesis; ubiquinone biosynthesis. Its function is as follows. Methyltransferase required for the conversion of demethylmenaquinol (DMKH2) to menaquinol (MKH2) and the conversion of 2-polyprenyl-6-methoxy-1,4-benzoquinol (DDMQH2) to 2-polyprenyl-3-methyl-6-methoxy-1,4-benzoquinol (DMQH2). The polypeptide is Ubiquinone/menaquinone biosynthesis C-methyltransferase UbiE (Yersinia pestis bv. Antiqua (strain Antiqua)).